The primary structure comprises 280 residues: Nitrogenase iron-iron protein alpha chain (280 aa).

3 residues coordinate [8Fe-7S] cluster: Cys-5, Cys-31, and Cys-94. Cys-213 provides a ligand contact to [8Fe-9S-C-homocitryl] cluster.

This sequence belongs to the NifD/NifK/NifE/NifN family. In terms of assembly, hexamer of two alpha, two beta, and two delta chains. [8Fe-7S] cluster is required as a cofactor. [8Fe-9S-C-homocitryl] cluster serves as cofactor.

The enzyme catalyses N2 + 8 reduced [2Fe-2S]-[ferredoxin] + 16 ATP + 16 H2O = H2 + 8 oxidized [2Fe-2S]-[ferredoxin] + 2 NH4(+) + 16 ADP + 16 phosphate + 6 H(+). Its function is as follows. This iron-iron protein is part of the nitrogenase complex that catalyzes the key enzymatic reactions in nitrogen fixation. Other nitrogenase complexes utilize a molybdenum-iron protein or a vanadium-iron protein. The polypeptide is Nitrogenase iron-iron protein alpha chain (anfD) (Heliomicrobium gestii (Heliobacterium gestii)).